The primary structure comprises 144 residues: Large ribosomal subunit protein uL16 (144 aa).

This sequence belongs to the universal ribosomal protein uL16 family. In terms of assembly, part of the 50S ribosomal subunit.

Binds 23S rRNA and is also seen to make contacts with the A and possibly P site tRNAs. The protein is Large ribosomal subunit protein uL16 of Erythrobacter litoralis (strain HTCC2594).